Here is a 78-residue protein sequence, read N- to C-terminus: Acyl carrier protein (78 aa).

Positions 2 to 77 (SDTAERVKKI…DAVKYIEKAT (76 aa)) constitute a Carrier domain. Position 37 is an O-(pantetheine 4'-phosphoryl)serine (S37).

Belongs to the acyl carrier protein (ACP) family. In terms of processing, 4'-phosphopantetheine is transferred from CoA to a specific serine of apo-ACP by AcpS. This modification is essential for activity because fatty acids are bound in thioester linkage to the sulfhydryl of the prosthetic group.

It is found in the cytoplasm. It participates in lipid metabolism; fatty acid biosynthesis. Functionally, carrier of the growing fatty acid chain in fatty acid biosynthesis. The protein is Acyl carrier protein of Chelativorans sp. (strain BNC1).